Consider the following 342-residue polypeptide: Aromatic amino acid aminotransferase (342 aa).

At Lys-214 the chain carries N6-(pyridoxal phosphate)lysine.

This sequence belongs to the class-II pyridoxal-phosphate-dependent aminotransferase family. Homodimer. Requires pyridoxal 5'-phosphate as cofactor.

The catalysed reaction is an aromatic L-alpha-amino acid + 2-oxoglutarate = an aromatic oxo-acid + L-glutamate. Aminotransferase that catalyzes the conversion of aromatic amino acids and 2-oxoglutarate into corresponding aromatic oxo acids and L-glutamate. This chain is Aromatic amino acid aminotransferase, found in Corynebacterium efficiens (strain DSM 44549 / YS-314 / AJ 12310 / JCM 11189 / NBRC 100395).